Reading from the N-terminus, the 156-residue chain is Cytochrome c-type biogenesis protein CcmE 1 (156 aa).

Topologically, residues 1-8 (MNATRRQR) are cytoplasmic. Residues 9 to 29 (LWWVICVLTAAALAVTLIVFA) traverse the membrane as a helical; Signal-anchor for type II membrane protein segment. The Periplasmic portion of the chain corresponds to 30–156 (LQRNMSYLFT…ATATPLTAPR (127 aa)). Positions 123 and 127 each coordinate heme. Residues 137–156 (AEGHAGKPIPATATPLTAPR) are disordered. Residues 146-156 (PATATPLTAPR) are compositionally biased toward low complexity.

It belongs to the CcmE/CycJ family.

The protein localises to the cell inner membrane. Functionally, heme chaperone required for the biogenesis of c-type cytochromes. Transiently binds heme delivered by CcmC and transfers the heme to apo-cytochromes in a process facilitated by CcmF and CcmH. This Xanthomonas euvesicatoria pv. vesicatoria (strain 85-10) (Xanthomonas campestris pv. vesicatoria) protein is Cytochrome c-type biogenesis protein CcmE 1.